We begin with the raw amino-acid sequence, 188 residues long: Elongation factor P (188 aa).

The protein belongs to the elongation factor P family.

Its subcellular location is the cytoplasm. It participates in protein biosynthesis; polypeptide chain elongation. In terms of biological role, involved in peptide bond synthesis. Stimulates efficient translation and peptide-bond synthesis on native or reconstituted 70S ribosomes in vitro. Probably functions indirectly by altering the affinity of the ribosome for aminoacyl-tRNA, thus increasing their reactivity as acceptors for peptidyl transferase. The chain is Elongation factor P from Rickettsia peacockii (strain Rustic).